A 148-amino-acid chain; its full sequence is Large ribosomal subunit protein bL9 (148 aa).

Belongs to the bacterial ribosomal protein bL9 family.

In terms of biological role, binds to the 23S rRNA. The protein is Large ribosomal subunit protein bL9 of Staphylococcus epidermidis (strain ATCC 35984 / DSM 28319 / BCRC 17069 / CCUG 31568 / BM 3577 / RP62A).